A 460-amino-acid chain; its full sequence is MKKDIPVKKNSTYNLYITGMGTKGEGIGKINNFTIFVTGAILGEEVEVNIIKVNKNYAVGKLLNIITPSANRVEPPCDIYTKCGGCQLQHMSYKEQLNFKRQKVKDALLRLGGIDVEVEEVLGMENPYRYRNKVQLPIGKEKGKVNIGFYAPRSHNIIDLKSCFIQDEKADKIIKILKEWIEKFNVSIYDEKEHKGNLRHIMVRTAFRTGQIMIVLVTKDKKLPHKEELINKLTEDLEGVVSIIQNMNSQKTNVVLGKESIVLWGKDKIIDYIGNFKFAITPLSFFQVNPIQTEVLYNKALEYADLKGDEVVFDAYCGTGTISLFLSQKAKKVYGVEIVNEAIESAKLNARENNVDNVDFIVGESEQIIPELIEKGIKADVVVVDPPRKGCEKSLLEAMAKMAPEKIVYVSCDPATLARDLGVLEELGYKTMKVQPVDMFSNTYHVETIILMTYYGDKKK.

In terms of domain architecture, TRAM spans 6–64 (PVKKNSTYNLYITGMGTKGEGIGKINNFTIFVTGAILGEEVEVNIIKVNKNYAVGKLLN). Cys77, Cys83, Cys86, and Cys163 together coordinate [4Fe-4S] cluster. S-adenosyl-L-methionine-binding residues include Gln287, Tyr316, Glu337, and Asp385. The active-site Nucleophile is the Cys412.

This sequence belongs to the class I-like SAM-binding methyltransferase superfamily. RNA M5U methyltransferase family.

This is an uncharacterized protein from Clostridium tetani (strain Massachusetts / E88).